The sequence spans 119 residues: Large ribosomal subunit protein bL20 (119 aa).

The protein belongs to the bacterial ribosomal protein bL20 family.

Its function is as follows. Binds directly to 23S ribosomal RNA and is necessary for the in vitro assembly process of the 50S ribosomal subunit. It is not involved in the protein synthesizing functions of that subunit. The protein is Large ribosomal subunit protein bL20 of Shewanella frigidimarina (strain NCIMB 400).